Consider the following 555-residue polypeptide: NAD-dependent protein deacetylase sirtuin-1 (555 aa).

The Nuclear localization signal signature appears at 39 to 46 (PPKRKKRK). The 261-residue stretch at 44–304 (KRKDINTIED…NELCHRLGGE (261 aa)) folds into the Deacetylase sirtuin-type domain. An N6-acetyllysine modification is found at lysine 46. The segment at 64–67 (IIVL) is required for interaction with the sumoylated form of CCAR2. NAD(+)-binding positions include 69–88 (GAGV…DGIY) and 153–156 (QNID). The active-site Proton acceptor is histidine 171. Zn(2+)-binding residues include cysteine 179 and cysteine 182. An N6-acetyllysine modification is found at lysine 185. 2 residues coordinate Zn(2+): cysteine 203 and cysteine 206. S-nitrosocysteine occurs at positions 203 and 206. Lysine 238 is modified (N6-acetyllysine). Positions 241–247 (VDLLIVI) match the Nuclear export signal motif. NAD(+) is bound by residues 248–250 (GSS), 273–275 (NRE), and cysteine 290. N6-acetyllysine is present on lysine 321. A disordered region spans residues 335–354 (LPPTPLHISEDSSSPERTVP). Threonine 338 is modified (phosphothreonine). At serine 343 the chain carries Phosphoserine. The span at 345-354 (DSSSPERTVP) shows a compositional bias: polar residues. At threonine 352 the chain carries Phosphothreonine. Residue lysine 417 is modified to N6-acetyllysine. Residues serine 466 and serine 468 each carry the phosphoserine modification. Residues 469-529 (EDDALSSSSC…GGSGADGGDQ (61 aa)) form a disordered region. Low complexity predominate over residues 473–493 (LSSSSCGSNSDSGTCQSPSLE). A compositionally biased stretch (acidic residues) spans 494-514 (EPLEDESEIEEFYNGLEDDAD). Serine 552 carries the post-translational modification Phosphoserine.

The protein belongs to the sirtuin family. Class I subfamily. In terms of assembly, interacts with XBP1 isoform 2. Found in a complex with PCAF and MYOD1. Interacts with FOXO1; the interaction deacetylates FOXO1, resulting in its nuclear retention and promotion of its transcriptional activity Component of the eNoSC complex, composed of SIRT1, SUV39H1 and RRP8. Interacts with HES1, HEY2 and PML. Interacts with RPS19BP1/AROS. Interacts with CCAR2 (via N-terminus); the interaction disrupts the interaction between SIRT1 and p53/TP53. Interacts with SETD7; the interaction induces the dissociation of SIRT1 from p53/TP53 and increases p53/TP53 activity. Interacts with MYCN, NR1I2, CREBZF, TSC2, TLE1, FOS, JUN, NR0B2, PPARG, NCOR, IRS1, IRS2 and NMNAT1. Interacts with HNF1A; the interaction occurs under nutrient restriction. Interacts with SUZ12; the interaction mediates the association with the PRC4 histone methylation complex which is specific as an association with PCR2 and PCR3 complex variants is not found. Interacts with HIV-1 tat. Interacts with BCL6; leads to a epigenetic repression of specific target genes. Interacts with CLOCK, BMAL1 and PER2. Interacts with PPARA; the interaction seems to be modulated by NAD(+) levels. Interacts with NR1H3 and this interaction is inhibited in the presence of CCAR2. Interacts with CHEK2. Interacts with p53/TP53. Exhibits a preferential interaction with sumoylated CCAR2 over its unmodified form. Interacts with PACS2. Interacts with SIRT7. Interacts with PUS7. Interacts with TULP3. Interacts with MORN3; the interaction enhances the ubiquitination of p53/TP53. Zn(2+) is required as a cofactor. Post-translationally, methylated on multiple lysine residues; methylation is enhanced after DNA damage and is dispensable for deacetylase activity toward p53/TP53. Phosphorylated. Phosphorylated by STK4/MST1, resulting in inhibition of SIRT1-mediated p53/TP53 deacetylation. Phosphorylation by MAPK8/JNK1 at Thr-338 leads to increased nuclear localization and enzymatic activity. Phosphorylation at Thr-338 by DYRK1A and DYRK3 activates deacetylase activity and promotes cell survival. Phosphorylated by CaMK2, leading to increased p53/TP53 and NF-kappa-B p65/RELA deacetylation activity. In terms of processing, S-nitrosylated by GAPDH, leading to inhibit the NAD-dependent protein deacetylase activity. Post-translationally, acetylated at various Lys residues. Deacetylated via an autocatalytic mechanism. Autodeacetylation at Lys-46 promotes its protein deacetylase activity. Ubiquitinated; leading to degradation. Deubiquitinated by USP22; leading to stabilization.

The protein localises to the nucleus. The protein resides in the PML body. It is found in the cytoplasm. The enzyme catalyses N(6)-acetyl-L-lysyl-[protein] + NAD(+) + H2O = 2''-O-acetyl-ADP-D-ribose + nicotinamide + L-lysyl-[protein]. It catalyses the reaction N(6)-propanoyl-L-lysyl-[protein] + NAD(+) + H2O = 3''-O-propanoyl-ADP-D-ribose + nicotinamide + L-lysyl-[protein]. It carries out the reaction N(6)-(2E)-butenoyl-L-lysyl-[protein] + NAD(+) + H2O = 2''-O-(2E)-but-2-enoyl-ADP-D-ribose + nicotinamide + L-lysyl-[protein]. With respect to regulation, inhibited by nicotinamide. Activated by resveratrol (3,5,4'-trihydroxy-trans-stilbene), butein (3,4,2',4'-tetrahydroxychalcone), piceatannol (3,5,3',4'-tetrahydroxy-trans-stilbene), Isoliquiritigenin (4,2',4'-trihydroxychalcone), fisetin (3,7,3',4'-tetrahydroxyflavone) and quercetin (3,5,7,3',4'-pentahydroxyflavone). MAPK8/JNK1 and RPS19BP1/AROS act as positive regulators of deacetylation activity. Negatively regulated by CCAR2. NAD-dependent protein deacetylase that links transcriptional regulation directly to intracellular energetics and participates in the coordination of several separated cellular functions such as cell cycle, response to DNA damage, metabolism, apoptosis and autophagy. Can modulate chromatin function through deacetylation of histones and can promote alterations in the methylation of histones and DNA, leading to transcriptional repression. Deacetylates a broad range of transcription factors and coregulators, thereby regulating target gene expression positively and negatively. Serves as a sensor of the cytosolic ratio of NAD(+)/NADH which is altered by glucose deprivation and metabolic changes associated with caloric restriction. Is essential in skeletal muscle cell differentiation and in response to low nutrients mediates the inhibitory effect on skeletal myoblast differentiation which also involves 5'-AMP-activated protein kinase (AMPK) and nicotinamide phosphoribosyltransferase (NAMPT). Component of the eNoSC (energy-dependent nucleolar silencing) complex, a complex that mediates silencing of rDNA in response to intracellular energy status and acts by recruiting histone-modifying enzymes. The eNoSC complex is able to sense the energy status of cell: upon glucose starvation, elevation of NAD(+)/NADP(+) ratio activates SIRT1, leading to histone H3 deacetylation followed by dimethylation of H3 at 'Lys-9' (H3K9me2) by SUV39H1 and the formation of silent chromatin in the rDNA locus. Deacetylates 'Lys-266' of SUV39H1, leading to its activation. Inhibits skeletal muscle differentiation by deacetylating PCAF and MYOD1. Deacetylates H2A and 'Lys-26' of H1-4. Deacetylates 'Lys-16' of histone H4 (in vitro). Involved in NR0B2/SHP corepression function through chromatin remodeling: Recruited to LRH1 target gene promoters by NR0B2/SHP thereby stimulating histone H3 and H4 deacetylation leading to transcriptional repression. Proposed to contribute to genomic integrity via positive regulation of telomere length; however, reports on localization to pericentromeric heterochromatin are conflicting. Proposed to play a role in constitutive heterochromatin (CH) formation and/or maintenance through regulation of the available pool of nuclear SUV39H1. Upon oxidative/metabolic stress decreases SUV39H1 degradation by inhibiting SUV39H1 polyubiquitination by MDM2. This increase in SUV39H1 levels enhances SUV39H1 turnover in CH, which in turn seems to accelerate renewal of the heterochromatin which correlates with greater genomic integrity during stress response. Deacetylates 'Lys-382' of p53/TP53 and impairs its ability to induce transcription-dependent proapoptotic program and modulate cell senescence. Deacetylates TAF1B and thereby represses rDNA transcription by the RNA polymerase I. Deacetylates MYC, promotes the association of MYC with MAX and decreases MYC stability leading to compromised transformational capability. Deacetylates FOXO3 in response to oxidative stress thereby increasing its ability to induce cell cycle arrest and resistance to oxidative stress but inhibiting FOXO3-mediated induction of apoptosis transcriptional activity; also leading to FOXO3 ubiquitination and protesomal degradation. Appears to have a similar effect on MLLT7/FOXO4 in regulation of transcriptional activity and apoptosis. Deacetylates DNMT1; thereby impairs DNMT1 methyltransferase-independent transcription repressor activity, modulates DNMT1 cell cycle regulatory function and DNMT1-mediated gene silencing. Deacetylates RELA/NF-kappa-B p65 thereby inhibiting its transactivating potential and augments apoptosis in response to TNF-alpha. Deacetylates HIF1A, KAT5/TIP60, RB1 and HIC1. Deacetylates FOXO1 resulting in its nuclear retention and enhancement of its transcriptional activity leading to increased gluconeogenesis in liver. Inhibits E2F1 transcriptional activity and apoptotic function, possibly by deacetylation. Involved in HES1- and HEY2-mediated transcriptional repression. In cooperation with MYCN seems to be involved in transcriptional repression of DUSP6/MAPK3 leading to MYCN stabilization by phosphorylation at 'Ser-62'. Deacetylates MEF2D. Required for antagonist-mediated transcription suppression of AR-dependent genes which may be linked to local deacetylation of histone H3. Represses HNF1A-mediated transcription. Required for the repression of ESRRG by CREBZF. Deacetylates NR1H3 AND NR1H2 and deacetylation of NR1H3 at 'Lys-434' positively regulates transcription of NR1H3:RXR target genes, promotes NR1H3 proteasomal degradation and results in cholesterol efflux; a promoter clearing mechanism after reach round of transcription is proposed. Involved in lipid metabolism: deacetylates LPIN1, thereby inhibiting diacylglycerol synthesis. Implicated in regulation of adipogenesis and fat mobilization in white adipocytes by repression of PPARG which probably involves association with NCOR1 and SMRT/NCOR2. Deacetylates p300/EP300 and PRMT1. Deacetylates ACSS2 leading to its activation, and HMGCS1 deacetylation. Involved in liver and muscle metabolism. Through deacetylation and activation of PPARGC1A is required to activate fatty acid oxidation in skeletal muscle under low-glucose conditions and is involved in glucose homeostasis. Involved in regulation of PPARA and fatty acid beta-oxidation in liver. Involved in positive regulation of insulin secretion in pancreatic beta cells in response to glucose; the function seems to imply transcriptional repression of UCP2. Proposed to deacetylate IRS2 thereby facilitating its insulin-induced tyrosine phosphorylation. Deacetylates SREBF1 isoform SREBP-1C thereby decreasing its stability and transactivation in lipogenic gene expression. Involved in DNA damage response by repressing genes which are involved in DNA repair, such as XPC and TP73, deacetylating XRCC6/Ku70, and facilitating recruitment of additional factors to sites of damaged DNA, such as SIRT1-deacetylated NBN can recruit ATM to initiate DNA repair and SIRT1-deacetylated XPA interacts with RPA2. Also involved in DNA repair of DNA double-strand breaks by homologous recombination and specifically single-strand annealing independently of XRCC6/Ku70 and NBN. Promotes DNA double-strand breaks by mediating deacetylation of SIRT6. Transcriptional suppression of XPC probably involves an E2F4:RBL2 suppressor complex and protein kinase B (AKT) signaling. Transcriptional suppression of TP73 probably involves E2F4 and PCAF. Deacetylates WRN thereby regulating its helicase and exonuclease activities and regulates WRN nuclear translocation in response to DNA damage. Deacetylates APEX1 at 'Lys-6' and 'Lys-7' and stimulates cellular AP endonuclease activity by promoting the association of APEX1 to XRCC1. Catalyzes deacetylation of ERCC4/XPF, thereby impairing interaction with ERCC1 and nucleotide excision repair (NER). Increases p53/TP53-mediated transcription-independent apoptosis by blocking nuclear translocation of cytoplasmic p53/TP53 and probably redirecting it to mitochondria. Deacetylates XRCC6/Ku70 at 'Lys-539' and 'Lys-542' causing it to sequester BAX away from mitochondria thereby inhibiting stress-induced apoptosis. Is involved in autophagy, presumably by deacetylating ATG5, ATG7 and MAP1LC3B/ATG8. Deacetylates AKT1 which leads to enhanced binding of AKT1 and PDK1 to PIP3 and promotes their activation. Proposed to play role in regulation of STK11/LBK1-dependent AMPK signaling pathways implicated in cellular senescence which seems to involve the regulation of the acetylation status of STK11/LBK1. Can deacetylate STK11/LBK1 and thereby increase its activity, cytoplasmic localization and association with STRAD; however, the relevance of such activity in normal cells is unclear. In endothelial cells is shown to inhibit STK11/LBK1 activity and to promote its degradation. Deacetylates SMAD7 at 'Lys-64' and 'Lys-70' thereby promoting its degradation. Deacetylates CIITA and augments its MHC class II transactivation and contributes to its stability. Deacetylates MECOM/EVI1. Deacetylates PML at 'Lys-487' and this deacetylation promotes PML control of PER2 nuclear localization. During the neurogenic transition, represses selective NOTCH1-target genes through histone deacetylation in a BCL6-dependent manner and leading to neuronal differentiation. Regulates the circadian expression of several core clock genes, including BMAL1, RORC, PER2 and CRY1 and plays a critical role in maintaining a controlled rhythmicity in histone acetylation, thereby contributing to circadian chromatin remodeling. Deacetylates BMAL1 and histones at the circadian gene promoters in order to facilitate repression by inhibitory components of the circadian oscillator. Deacetylates PER2, facilitating its ubiquitination and degradation by the proteasome. Protects cardiomyocytes against palmitate-induced apoptosis. Deacetylates XBP1 isoform 2; deacetylation decreases protein stability of XBP1 isoform 2 and inhibits its transcriptional activity. Deacetylates PCK1 and directs its activity toward phosphoenolpyruvate production promoting gluconeogenesis. Involved in the CCAR2-mediated regulation of PCK1 and NR1D1. Deacetylates CTNB1 at 'Lys-49'. In POMC (pro-opiomelanocortin) neurons, required for leptin-induced activation of PI3K signaling. In addition to protein deacetylase activity, also acts as a protein-lysine deacylase by mediating protein depropionylation and decrotonylation. Mediates depropionylation of Osterix (SP7). Catalyzes decrotonylation of histones; it however does not represent a major histone decrotonylase. Deacetylates SOX9; promoting SOX9 nuclear localization and transactivation activity. Involved in the regulation of centrosome duplication. Deacetylates CENATAC in G1 phase, allowing for SASS6 accumulation on the centrosome and subsequent procentriole assembly. Deacetylates NDC80/HEC1. The sequence is that of NAD-dependent protein deacetylase sirtuin-1 from Rattus norvegicus (Rat).